A 164-amino-acid chain; its full sequence is Arginine repressor (164 aa).

The protein belongs to the ArgR family.

Its subcellular location is the cytoplasm. The protein operates within amino-acid biosynthesis; L-arginine biosynthesis [regulation]. Its function is as follows. Regulates arginine biosynthesis genes. The polypeptide is Arginine repressor (Thermus thermophilus (strain ATCC BAA-163 / DSM 7039 / HB27)).